Consider the following 308-residue polypeptide: Aspartate carbamoyltransferase catalytic subunit (308 aa).

2 residues coordinate carbamoyl phosphate: Arg49 and Thr50. Residue Lys77 participates in L-aspartate binding. Residues Arg99, His127, and Gln130 each contribute to the carbamoyl phosphate site. L-aspartate contacts are provided by Arg160 and Arg211. Residues Ala252 and Pro253 each contribute to the carbamoyl phosphate site.

The protein belongs to the aspartate/ornithine carbamoyltransferase superfamily. ATCase family. In terms of assembly, heterododecamer (2C3:3R2) of six catalytic PyrB chains organized as two trimers (C3), and six regulatory PyrI chains organized as three dimers (R2).

The catalysed reaction is carbamoyl phosphate + L-aspartate = N-carbamoyl-L-aspartate + phosphate + H(+). It functions in the pathway pyrimidine metabolism; UMP biosynthesis via de novo pathway; (S)-dihydroorotate from bicarbonate: step 2/3. Functionally, catalyzes the condensation of carbamoyl phosphate and aspartate to form carbamoyl aspartate and inorganic phosphate, the committed step in the de novo pyrimidine nucleotide biosynthesis pathway. This Geobacillus thermodenitrificans (strain NG80-2) protein is Aspartate carbamoyltransferase catalytic subunit.